The sequence spans 303 residues: GTPase Era (303 aa).

Residues 8-176 (YCGFIAIVGR…ASIVRKHMPE (169 aa)) form the Era-type G domain. Residues 16 to 23 (GRPNVGKS) form a G1 region. GTP is bound at residue 16–23 (GRPNVGKS). The interval 42 to 46 (QTTRH) is G2. Residues 63 to 66 (DTPG) are G3. GTP contacts are provided by residues 63–67 (DTPGL) and 125–128 (NKVD). Residues 125-128 (NKVD) form a G4 region. The interval 155 to 157 (ISA) is G5. In terms of domain architecture, KH type-2 spans 207–284 (LGEELPYSVT…HLELWVKVKS (78 aa)).

This sequence belongs to the TRAFAC class TrmE-Era-EngA-EngB-Septin-like GTPase superfamily. Era GTPase family. In terms of assembly, monomer.

The protein resides in the cytoplasm. It localises to the cell inner membrane. An essential GTPase that binds both GDP and GTP, with rapid nucleotide exchange. Plays a role in 16S rRNA processing and 30S ribosomal subunit biogenesis and possibly also in cell cycle regulation and energy metabolism. The protein is GTPase Era of Yersinia pseudotuberculosis serotype O:1b (strain IP 31758).